A 256-amino-acid polypeptide reads, in one-letter code: Trans-aconitate 2-methyltransferase (256 aa).

Belongs to the methyltransferase superfamily. Tam family.

Its subcellular location is the cytoplasm. The enzyme catalyses trans-aconitate + S-adenosyl-L-methionine = (E)-3-(methoxycarbonyl)pent-2-enedioate + S-adenosyl-L-homocysteine. In terms of biological role, catalyzes the S-adenosylmethionine monomethyl esterification of trans-aconitate. In Agrobacterium fabrum (strain C58 / ATCC 33970) (Agrobacterium tumefaciens (strain C58)), this protein is Trans-aconitate 2-methyltransferase.